The sequence spans 354 residues: Tsukushi (354 aa).

The signal sequence occupies residues 1 to 17 (MLCSLFLLLLAVGRVQT). One can recognise an LRRNT domain in the interval 18–59 (TRPCFPGCQCEEETFGLFDSFSLIRVDCSSLGPHIVPVPIPL). LRR repeat units follow at residues 60-81 (DTAHLDLSSNRLETVNESVLAG), 86-107 (TLAGLDLSYNLLTSIMPSAFSR), 110-131 (YLESLDLSHNGLAALPAEIFTS), 133-154 (PLSDINLSHNRLREVSISAFTT), 160-180 (ALHVDLSHNLIHRLLPHPARA), 186-207 (TIQSLNLSWNRFRAVPDLRDLP), 208-228 (LRYLSLDGNPLATINPDAFMG), 231-253 (GLTHLSLASLQGILHLPPHGFRE), 256-277 (GLQVLDLSGNPKLKWAGAEVFS), and 281-302 (LLQELDLSGSSLVPLPEMLLHH). N-linked (GlcNAc...) asparagine glycosylation is present at N75. Residue N138 is glycosylated (N-linked (GlcNAc...) asparagine). N191 carries N-linked (GlcNAc...) asparagine glycosylation.

Interacts with FZD4 (via FZ domain); competes with WNT2B for binding to FZD4, inhibiting Wnt signaling and repressing peripheral eye development. Interacts with TGFB1; the interaction contributes to regulation of the hair cycle. Interacts with netrin. Interacts with CCN2. In terms of tissue distribution, expressed in macrophages in inflamed wounds with wound expression starting 2 days post-wounding (dpw) (at protein level). At 7 dpw, expressed from epidermis and extracellular matrix in the wound edge to neoepidermis and granulation tissue and in panniculus carnosus under the granulation tissue (at protein level). After fibrosis, disappears in the dermal area at 11 dpw (at protein level). Expressed in the hair follicle during morphogenesis and the hair cycle (at protein level). In embryonic brain, strong expression in the olfactory bulb, anterior olfactory nucleus, neocortex, piriform cortex, glial wedge, midline zipper glia, indusium griseum and the area surrounding the anterior commissure (AC) but not on AC axons (at protein level). In the adult eye, expressed in retinal layers, lens epithelium, and ciliary body where it is expressed predominantly in the inner non-pigmented layer. Expressed in almost all brain regions in the embryo, in the cortex and the lateral ventricle at P0 and is restricted to the subventricular zone and lateral nucleus of the amygdala in adults. Prominent expression in hippocampal regions from early postnatal stages until postnatal day 15 and gradually declines at later stages. Expressed in almost all bone regions in the femurs of juveniles. In the inner ear, accumulates in nonprosensory regions during early embryonic stages and in both nonprosensory and prosensory regions in late embryonic stages. In the adult ear, expressed in the organ of Corti, spiral ganglion cells, and the stria vascularis. Highly expressed in the liver where it is detected primarily in hepatocytes but not in non-parenchymal cells.

Its subcellular location is the secreted. Functionally, contributes to various developmental events and other processes such as wound healing and cholesterol homeostasis through its interactions with multiple signaling pathways. Wnt signaling inhibitor which competes with WNT2B for binding to Wnt receptor FZD4 and represses WNT2B-dependent development of the peripheral eye. Plays a role in regulating the hair cycle by controlling TGFB1 signaling. Required for the development of the anterior commissure in the brain by inhibiting neurite outgrowth. Essential for terminal differentiation of hippocampal neural stem cells. Plays a role in regulating bone elongation and bone mass by modulating growth plate chondrocyte function and overall body size. Required for development of the inner ear through its involvement in stereocilia formation in inner hair cells. Facilitates wound healing by inhibiting secretion of TGFB1 from macrophages which prevents myofibroblast differentiation, maintaining inflammatory cell quiescence. Plays a role in cholesterol homeostasis by reducing circulating high-density lipoprotein cholesterol, lowering cholesterol efflux capacity and decreasing cholesterol-to-bile acid conversion in the liver. In one study, shown to negatively regulate sympathetic innervation in brown fat, leading to reduced energy expenditure. In another study, shown not to affect brown fat thermogenic capacity, body weight gain or glucose homeostasis. This is Tsukushi from Mus musculus (Mouse).